The following is a 358-amino-acid chain: Alanine racemase (358 aa).

Residue Lys35 is the Proton acceptor; specific for D-alanine of the active site. Lys35 carries the post-translational modification N6-(pyridoxal phosphate)lysine. Substrate is bound at residue Arg130. Tyr255 acts as the Proton acceptor; specific for L-alanine in catalysis. A substrate-binding site is contributed by Met303.

This sequence belongs to the alanine racemase family. Requires pyridoxal 5'-phosphate as cofactor.

It catalyses the reaction L-alanine = D-alanine. It participates in amino-acid biosynthesis; D-alanine biosynthesis; D-alanine from L-alanine: step 1/1. Its function is as follows. Catalyzes the interconversion of L-alanine and D-alanine. May also act on other amino acids. This is Alanine racemase (alr) from Shewanella oneidensis (strain ATCC 700550 / JCM 31522 / CIP 106686 / LMG 19005 / NCIMB 14063 / MR-1).